The chain runs to 960 residues: MSDTRETLAELEQRDAFIGRHIGPDEAEKTAMLNALGVADMETLISKTVPETIRIKEGLELDGPCTEAQALAELKAFAERNKVFKTYIGMGYYNTLTPTVILRNVLENPAWYTAYTPYQPEISQGRLEALLNFQTMIGDLTGMEMANASLLDEGTAAAEAMTMCRRVNGKNKSNVFFVAEDCLPQTIEVVKGRAEPLGIEVVVGDPQKDLQNHDYFAVLLQYPGVNGDVRDYRELIKTAHESNALAIMAADILSLTLLTPPGELGADIAIGNSQRFGVPLFFGGPHAAYIATKDEYKRSLPGRLVGVSVDANGDKAYRLALQTREQHIRRQNATSNICTAQALLAITASMYGAYHGPEGLKRIARRVHRLTTILAEGLKQAGRSVNTAHFFDTVSVATGGDTDAVYQAALQQKINLRRIDDNTLGVSLDETTTREDVAALLHVFASGKPVADVATLDSSAKDAIPAELRRQSAFMTHTVFNRYHSETEMLRYLRRLSDKDLALDRTMIPLGSCTMKLNATTEMTPVSWDGFCAIHPFAPLDQTEGYRALIADLERMLSAATGYAAFSLQPNAGSQGEYAGLLAIRAYHHSRGEGDRDVCLIPNSAHGTNPASAQMVGMKVVAVKCDDNGNVDLNDLRLKAEQHSAKLAALMATYPSTHGVFEEGIREVCSIVHQHGGQVYIDGANLNAMVGLCKPGQFGGDVSHLNLHKTFCIPHGGGGPGVGPIGVAAHLAPFLPGHSAMGETADKAIAPISAAPWGSAGILPISWTYIRMMGGEGLTEATKSAILNANYIAKRLEPHYPVLYTGSQGFVAHECIIDVRPFKDSCGVTVDDIAKRLIDFGFHAPTMSFPVPGTLMIEPTESESLAELDRFCDAMIAIREEIRAIENGEYDVDHSPLHHAPHTAADLVGDWDRPYSRERGVYPLKALKADKYWSPVGRIDNVYGDRNLVCACPPMTEYED.

At K709 the chain carries N6-(pyridoxal phosphate)lysine.

The protein belongs to the GcvP family. As to quaternary structure, the glycine cleavage system is composed of four proteins: P, T, L and H. Pyridoxal 5'-phosphate is required as a cofactor.

The enzyme catalyses N(6)-[(R)-lipoyl]-L-lysyl-[glycine-cleavage complex H protein] + glycine + H(+) = N(6)-[(R)-S(8)-aminomethyldihydrolipoyl]-L-lysyl-[glycine-cleavage complex H protein] + CO2. In terms of biological role, the glycine cleavage system catalyzes the degradation of glycine. The P protein binds the alpha-amino group of glycine through its pyridoxal phosphate cofactor; CO(2) is released and the remaining methylamine moiety is then transferred to the lipoamide cofactor of the H protein. The chain is Glycine dehydrogenase (decarboxylating) from Hahella chejuensis (strain KCTC 2396).